The sequence spans 214 residues: 2-phospho-L-lactate guanylyltransferase (214 aa).

It belongs to the CofC family. As to quaternary structure, homodimer.

The catalysed reaction is (2S)-2-phospholactate + GTP + H(+) = (2S)-lactyl-2-diphospho-5'-guanosine + diphosphate. The protein operates within cofactor biosynthesis; coenzyme F420 biosynthesis. Functionally, guanylyltransferase that catalyzes the activation of (2S)-2-phospholactate (2-PL) as (2S)-lactyl-2-diphospho-5'-guanosine, via the condensation of 2-PL with GTP. It is involved in the biosynthesis of coenzyme F420, a hydride carrier cofactor. This Methanoregula boonei (strain DSM 21154 / JCM 14090 / 6A8) protein is 2-phospho-L-lactate guanylyltransferase.